An 87-amino-acid chain; its full sequence is Olfactory receptor-like protein HbT2 (87 aa).

The Cytoplasmic segment spans residues 1-8 (KLWRMTGT). Residues 9-29 (WLGGFCHSIIQIPVIIQLPFC) traverse the membrane as a helical segment. The Extracellular portion of the chain corresponds to 30–55 (GPNVIDHYFRDLQPLFKLACTDTFME). Residues 56-76 (GVIVLAFSGLFSVFSFLILVS) traverse the membrane as a helical segment. Residues 77-87 (SYIVILVNLRN) lie on the Cytoplasmic side of the membrane.

It belongs to the G-protein coupled receptor 1 family.

The protein resides in the cell membrane. Functionally, odorant receptor. The sequence is that of Olfactory receptor-like protein HbT2 from Apis mellifera ligustica (Common honeybee).